Reading from the N-terminus, the 459-residue chain is Bifunctional protein GlmU (459 aa).

A pyrophosphorylase region spans residues methionine 1 to arginine 229. UDP-N-acetyl-alpha-D-glucosamine contacts are provided by residues leucine 8–glycine 11, lysine 22, glutamine 72, glycine 77–threonine 78, glycine 101–aspartate 102, glycine 139, glutamate 154, asparagine 169, and asparagine 227. A Ca(2+)-binding site is contributed by aspartate 102. Aspartate 102 contributes to the Mg(2+) binding site. Residue asparagine 227 coordinates Ca(2+). Position 227 (asparagine 227) interacts with Mg(2+). A linker region spans residues valine 230 to asparagine 250. The N-acetyltransferase stretch occupies residues glycine 251 to glutamine 459. Arginine 332 and lysine 350 together coordinate UDP-N-acetyl-alpha-D-glucosamine. Catalysis depends on histidine 362, which acts as the Proton acceptor. UDP-N-acetyl-alpha-D-glucosamine is bound by residues tyrosine 365 and asparagine 376. Residues alanine 379, asparagine 385–tyrosine 386, serine 404, alanine 422, and arginine 439 contribute to the acetyl-CoA site.

It in the N-terminal section; belongs to the N-acetylglucosamine-1-phosphate uridyltransferase family. The protein in the C-terminal section; belongs to the transferase hexapeptide repeat family. Homotrimer. Mg(2+) serves as cofactor. Requires Ca(2+) as cofactor.

Its subcellular location is the cytoplasm. The enzyme catalyses alpha-D-glucosamine 1-phosphate + acetyl-CoA = N-acetyl-alpha-D-glucosamine 1-phosphate + CoA + H(+). It catalyses the reaction N-acetyl-alpha-D-glucosamine 1-phosphate + UTP + H(+) = UDP-N-acetyl-alpha-D-glucosamine + diphosphate. It participates in nucleotide-sugar biosynthesis; UDP-N-acetyl-alpha-D-glucosamine biosynthesis; N-acetyl-alpha-D-glucosamine 1-phosphate from alpha-D-glucosamine 6-phosphate (route II): step 2/2. The protein operates within nucleotide-sugar biosynthesis; UDP-N-acetyl-alpha-D-glucosamine biosynthesis; UDP-N-acetyl-alpha-D-glucosamine from N-acetyl-alpha-D-glucosamine 1-phosphate: step 1/1. Its pathway is bacterial outer membrane biogenesis; LPS lipid A biosynthesis. Catalyzes the last two sequential reactions in the de novo biosynthetic pathway for UDP-N-acetylglucosamine (UDP-GlcNAc). The C-terminal domain catalyzes the transfer of acetyl group from acetyl coenzyme A to glucosamine-1-phosphate (GlcN-1-P) to produce N-acetylglucosamine-1-phosphate (GlcNAc-1-P), which is converted into UDP-GlcNAc by the transfer of uridine 5-monophosphate (from uridine 5-triphosphate), a reaction catalyzed by the N-terminal domain. The chain is Bifunctional protein GlmU from Streptococcus pneumoniae serotype 4 (strain ATCC BAA-334 / TIGR4).